Consider the following 177-residue polypeptide: ATP synthase subunit delta (177 aa).

It belongs to the ATPase delta chain family. As to quaternary structure, F-type ATPases have 2 components, F(1) - the catalytic core - and F(0) - the membrane proton channel. F(1) has five subunits: alpha(3), beta(3), gamma(1), delta(1), epsilon(1). F(0) has three main subunits: a(1), b(2) and c(10-14). The alpha and beta chains form an alternating ring which encloses part of the gamma chain. F(1) is attached to F(0) by a central stalk formed by the gamma and epsilon chains, while a peripheral stalk is formed by the delta and b chains.

The protein resides in the cell inner membrane. Functionally, f(1)F(0) ATP synthase produces ATP from ADP in the presence of a proton or sodium gradient. F-type ATPases consist of two structural domains, F(1) containing the extramembraneous catalytic core and F(0) containing the membrane proton channel, linked together by a central stalk and a peripheral stalk. During catalysis, ATP synthesis in the catalytic domain of F(1) is coupled via a rotary mechanism of the central stalk subunits to proton translocation. Its function is as follows. This protein is part of the stalk that links CF(0) to CF(1). It either transmits conformational changes from CF(0) to CF(1) or is implicated in proton conduction. This is ATP synthase subunit delta from Escherichia coli O81 (strain ED1a).